We begin with the raw amino-acid sequence, 393 residues long: Putative F-box protein At1g55070 (393 aa).

An F-box domain is found at 29–74; that stretch reads GEYFDRIPADLVIKILSKLSAKSMAKCRCVCKLLSSIIRQPNYNQL.

This is Putative F-box protein At1g55070 from Arabidopsis thaliana (Mouse-ear cress).